We begin with the raw amino-acid sequence, 234 residues long: Peptidyl-tRNA hydrolase (234 aa).

Tyr14 contributes to the tRNA binding site. Catalysis depends on His19, which acts as the Proton acceptor. Residues Phe64, Asn66, and Asn112 each contribute to the tRNA site. The tract at residues 187–234 (TGTKADEEKPKPAKSHIHQARNGVQPKKLPETGPMAEMLKKMFGPKKD) is disordered.

The protein belongs to the PTH family. Monomer.

The protein resides in the cytoplasm. It catalyses the reaction an N-acyl-L-alpha-aminoacyl-tRNA + H2O = an N-acyl-L-amino acid + a tRNA + H(+). Its function is as follows. Hydrolyzes ribosome-free peptidyl-tRNAs (with 1 or more amino acids incorporated), which drop off the ribosome during protein synthesis, or as a result of ribosome stalling. In terms of biological role, catalyzes the release of premature peptidyl moieties from peptidyl-tRNA molecules trapped in stalled 50S ribosomal subunits, and thus maintains levels of free tRNAs and 50S ribosomes. In Allorhizobium ampelinum (strain ATCC BAA-846 / DSM 112012 / S4) (Agrobacterium vitis (strain S4)), this protein is Peptidyl-tRNA hydrolase.